The sequence spans 271 residues: Dermonecrotic toxin LarSicTox-alphaIB1c (271 aa).

His3 is an active-site residue. Mg(2+)-binding residues include Glu23 and Asp25. His39 acts as the Nucleophile in catalysis. 2 disulfide bridges follow: Cys43/Cys49 and Cys45/Cys188. Mg(2+) is bound at residue Asp83. A glycan (N-linked (GlcNAc...) asparagine) is linked at Asn248.

It belongs to the arthropod phospholipase D family. Class II subfamily. Mg(2+) serves as cofactor. Expressed by the venom gland.

Its subcellular location is the secreted. The enzyme catalyses an N-(acyl)-sphingosylphosphocholine = an N-(acyl)-sphingosyl-1,3-cyclic phosphate + choline. It catalyses the reaction an N-(acyl)-sphingosylphosphoethanolamine = an N-(acyl)-sphingosyl-1,3-cyclic phosphate + ethanolamine. The catalysed reaction is a 1-acyl-sn-glycero-3-phosphocholine = a 1-acyl-sn-glycero-2,3-cyclic phosphate + choline. It carries out the reaction a 1-acyl-sn-glycero-3-phosphoethanolamine = a 1-acyl-sn-glycero-2,3-cyclic phosphate + ethanolamine. In terms of biological role, dermonecrotic toxins cleave the phosphodiester linkage between the phosphate and headgroup of certain phospholipids (sphingolipid and lysolipid substrates), forming an alcohol (often choline) and a cyclic phosphate. This toxin acts on sphingomyelin (SM). It may also act on ceramide phosphoethanolamine (CPE), lysophosphatidylcholine (LPC) and lysophosphatidylethanolamine (LPE), but not on lysophosphatidylserine (LPS), and lysophosphatidylglycerol (LPG). It acts by transphosphatidylation, releasing exclusively cyclic phosphate products as second products. Induces dermonecrosis, hemolysis, increased vascular permeability, edema, inflammatory response, and platelet aggregation. This chain is Dermonecrotic toxin LarSicTox-alphaIB1c, found in Loxosceles arizonica (Arizona brown spider).